The primary structure comprises 805 residues: Arginine/serine-rich protein PNISR (805 aa).

Polar residues predominate over residues 75-88; sequence NNHGNFQGDSNFNR. Disordered regions lie at residues 75–331 and 382–805; these read NNHG…EEKE and LTGL…SRSR. Pro residues-rich tracts occupy residues 100 to 115 and 183 to 194; these read PPHP…PAPG and YWQPGPPGPPAP. The span at 197–210 shows a compositional bias: basic and acidic residues; sequence NRRERPPSFRDRQR. Residues Ser-204 and Ser-211 each carry the phosphoserine modification. Lys-218 is covalently cross-linked (Glycyl lysine isopeptide (Lys-Gly) (interchain with G-Cter in SUMO2)). The stretch at 237–276 forms a coiled coil; the sequence is REGLEKMEREKQKKLEKERMEQQRSQLSKKEKKATEDAEG. Basic and acidic residues predominate over residues 238–258; sequence EGLEKMEREKQKKLEKERMEQ. Residues Ser-290, Ser-304, Ser-313, and Ser-321 each carry the phosphoserine modification. The span at 290-299 shows a compositional bias: acidic residues; it reads SDEEDEDAEN. Residues 384 to 393 are compositionally biased toward gly residues; that stretch reads GLGGLGGYGS. Positions 421-463 are enriched in basic and acidic residues; the sequence is QKQEAFWRKEKEQQLLQDKQIEEEKQQTERVTKEMNEFIHREQ. The stretch at 427–461 forms a coiled coil; it reads WRKEKEQQLLQDKQIEEEKQQTERVTKEMNEFIHR. 2 positions are modified to phosphoserine: Ser-465 and Ser-467. Composition is skewed to basic and acidic residues over residues 473 to 486 and 494 to 508; these read EADR…KRTP and EPKR…ERGS. Position 485 is a phosphothreonine (Thr-485). Lys-496 is covalently cross-linked (Glycyl lysine isopeptide (Lys-Gly) (interchain with G-Cter in SUMO2)). Residues 509 to 550 are compositionally biased toward low complexity; it reads RSGSSSSGSSSSGSRTSSSSSSVSSSSYSSSSGSSCTSSRSS. Basic residues-rich tracts occupy residues 551-560, 567-579, 587-598, and 607-639; these read SPKRRKRPSR, KARR…YSRR, TRGKLRDRRRSN, and RRNR…SRDR. The segment covering 659-721 has biased composition (basic and acidic residues); the sequence is EAKEQDRKKE…KRKRESERTF (63 aa). Residue Lys-703 forms a Glycyl lysine isopeptide (Lys-Gly) (interchain with G-Cter in SUMO2) linkage. Residue Ser-726 is modified to Phosphoserine. A compositionally biased stretch (basic and acidic residues) spans 732-753; sequence IRHDSRQDSKKNATKDSKRHSG. The span at 754–767 shows a compositional bias: low complexity; it reads SDSSGRSSSESPGS. Basic residues-rich tracts occupy residues 771–781 and 789–805; these read KKAKKPKHSRS and RSGK…SRSR.

Belongs to the splicing factor SR family. In terms of assembly, interacts with PNN.

The protein localises to the nucleus speckle. In Mus musculus (Mouse), this protein is Arginine/serine-rich protein PNISR (Pnisr).